The primary structure comprises 339 residues: Lipoate-protein ligase A (339 aa).

In terms of domain architecture, BPL/LPL catalytic spans 28-211; that stretch reads NPDSHTLFLW…AFREYYRDTD (184 aa). Residues Arg-70, 75–78, and Lys-129 each bind ATP; that span reads GAVF. Lys-129 contacts (R)-lipoate.

It belongs to the LplA family. Monomer.

It localises to the cytoplasm. It carries out the reaction L-lysyl-[lipoyl-carrier protein] + (R)-lipoate + ATP = N(6)-[(R)-lipoyl]-L-lysyl-[lipoyl-carrier protein] + AMP + diphosphate + H(+). It functions in the pathway protein modification; protein lipoylation via exogenous pathway; protein N(6)-(lipoyl)lysine from lipoate: step 1/2. Its pathway is protein modification; protein lipoylation via exogenous pathway; protein N(6)-(lipoyl)lysine from lipoate: step 2/2. Catalyzes both the ATP-dependent activation of exogenously supplied lipoate to lipoyl-AMP and the transfer of the activated lipoyl onto the lipoyl domains of lipoate-dependent enzymes. The sequence is that of Lipoate-protein ligase A from Psychrobacter cryohalolentis (strain ATCC BAA-1226 / DSM 17306 / VKM B-2378 / K5).